The primary structure comprises 329 residues: Sideroflexin-1.1 (329 aa).

The next 5 membrane-spanning stretches (helical) occupy residues 100-122 (MPGN…GVVF), 150-167 (LFVS…VALG), 178-198 (LAAR…NIPM), 232-254 (VTLS…MNRI), and 274-294 (IQTL…CALF).

This sequence belongs to the sideroflexin family.

The protein resides in the mitochondrion inner membrane. It carries out the reaction L-serine(in) = L-serine(out). It catalyses the reaction L-alanine(in) = L-alanine(out). The catalysed reaction is L-cysteine(in) = L-cysteine(out). Amino acid transporter importing serine, an essential substrate of the mitochondrial branch of the one-carbon pathway, into mitochondria. Mitochondrial serine is then converted to glycine and formate, which exits to the cytosol where it is used to generate the charged folates that serve as one-carbon donors. May also transport other amino acids including alanine and cysteine. The sequence is that of Sideroflexin-1.1 from Caenorhabditis elegans.